We begin with the raw amino-acid sequence, 231 residues long: 5'-methylthioadenosine/S-adenosylhomocysteine nucleosidase (231 aa).

The active-site Proton acceptor is the Glu-12. Substrate-binding positions include Gly-78, Met-153, and 174-175 (ME). Asp-198 functions as the Proton donor in the catalytic mechanism.

The protein belongs to the PNP/UDP phosphorylase family. MtnN subfamily.

The enzyme catalyses S-adenosyl-L-homocysteine + H2O = S-(5-deoxy-D-ribos-5-yl)-L-homocysteine + adenine. The catalysed reaction is S-methyl-5'-thioadenosine + H2O = 5-(methylsulfanyl)-D-ribose + adenine. It carries out the reaction 5'-deoxyadenosine + H2O = 5-deoxy-D-ribose + adenine. Its pathway is amino-acid biosynthesis; L-methionine biosynthesis via salvage pathway; S-methyl-5-thio-alpha-D-ribose 1-phosphate from S-methyl-5'-thioadenosine (hydrolase route): step 1/2. Its function is as follows. Catalyzes the irreversible cleavage of the glycosidic bond in both 5'-methylthioadenosine (MTA) and S-adenosylhomocysteine (SAH/AdoHcy) to adenine and the corresponding thioribose, 5'-methylthioribose and S-ribosylhomocysteine, respectively. Also cleaves 5'-deoxyadenosine, a toxic by-product of radical S-adenosylmethionine (SAM) enzymes, into 5-deoxyribose and adenine. The polypeptide is 5'-methylthioadenosine/S-adenosylhomocysteine nucleosidase (Bacillus pumilus (strain SAFR-032)).